The chain runs to 855 residues: Oxysterol-binding protein-related protein 3 (855 aa).

The interval 1–32 (MSDEKNLGVSQKLVSPSRSTSSCSSKQGSRQD) is disordered. Ser15 and Ser33 each carry phosphoserine. Over residues 15–31 (SPSRSTSSCSSKQGSRQ) the composition is skewed to low complexity. The 96-residue stretch at 50–145 (PPVQKGFLLK…WVSKLRHHRM (96 aa)) folds into the PH domain. An FFAT 1 motif is present at residues 161-167 (FFSGSSV). A phosphoserine mark is found at Ser199, Ser250, Ser272, Ser277, Ser288, Ser291, Ser340, Ser393, Ser405, and Ser408. A disordered region spans residues 274-293 (PNLSTLDFGEEKSYSDGSEA). The tract at residues 377-396 (DPPAVPKPGDNLAEENSRDE) is disordered. The FFAT 2 motif lies at 450–454 (LSLDN). Residues 468-490 (PVLESSGEARSKRRTSLPAPGPN) form a disordered region.

Belongs to the OSBP family. As to quaternary structure, homodimer. Interacts with RRAS. Interacts (phosphorylated form) with VAPA. Interacts with OSBPL6. Post-translationally, phosphorylation is enhanced in vitro by phorbol-12-myristate-13-acetate (PMA), forskolin and calcium ionophore A23187. Phosphorylation seems to be stimulated in conditions of low cell-cell (or cell-matrix) adhesion. Expressed in spinal ganglia. Expressed in a subset of small lymphocytes (at protein level).

Its subcellular location is the endoplasmic reticulum membrane. The protein localises to the cytoplasm. The protein resides in the cytosol. It is found in the cell membrane. It localises to the cell projection. Its subcellular location is the filopodium tip. The protein localises to the nucleus membrane. Functionally, phosphoinositide-binding protein which associates with both cell and endoplasmic reticulum (ER) membranes. Can bind to the ER membrane protein VAPA and recruit VAPA to plasma membrane sites, thus linking these intracellular compartments. The ORP3-VAPA complex stimulates RRAS signaling which in turn attenuates integrin beta-1 (ITGB1) activation at the cell surface. With VAPA, may regulate ER morphology. Has a role in regulation of the actin cytoskeleton, cell polarity and cell adhesion. Binds to phosphoinositides with preference for PI(3,4)P2 and PI(3,4,5)P3. Also binds 25-hydroxycholesterol and cholesterol. This is Oxysterol-binding protein-related protein 3 (Osbpl3) from Mus musculus (Mouse).